Consider the following 359-residue polypeptide: MEKIFQNVEIKPFLIDFSNPFIKNAAKRLFQLEEQLPLVPVNVVMDFKGINRAAVHGLSRVLQDEIPNYMLDIKPGGYKIEDSTDLFMTEQFIRNRINFIPIYAKNETLVFALRSLNNSCEVKTIYSRDLIQVAGPKLKYPIFNPTFEIGFLQPGKSLIIEDIYIKKGIGRKHAAFNLAVKTHFSHLDIEQYPTDKKEYMALSGYKQSSMTSDPRHHRLGLCFPAVPLPHINQAVRTYLKNACRVIIGRIQSIQKIYENFEEPQPELVLFSMDEEKTKAIITIKDETHTIGNLLKTYIYEMIPDISFVGYQCVPHKQEMVLTIIHKASQEDLITLLEKSIQNIIQTFQILEKNVDELIA.

It in the N-terminal section; belongs to the archaeal RpoD/eukaryotic RPB3 RNA polymerase subunit family. This sequence in the C-terminal section; belongs to the archaeal RpoL/eukaryotic RPB11/RPC19 RNA polymerase subunit family. As to quaternary structure, part of the viral DNA-directed RNA polymerase that consists of 8 polII-like subunits (RPB1, RPB2, RPB3, RPB5, RPB6, RPB7, RPB9, RPB10), a capping enzyme and a termination factor.

It is found in the host cytoplasm. Its subcellular location is the virion. Functionally, component of the DNA-directed RNA polymerase (RNAP) that catalyzes the transcription in the cytoplasm of viral DNA into RNA using the four ribonucleoside triphosphates as substrates. The polypeptide is DNA-directed RNA polymerase RPB3-11 homolog (Ornithodoros (relapsing fever ticks)).